A 180-amino-acid chain; its full sequence is ATP synthase subunit delta (180 aa).

The protein belongs to the ATPase delta chain family. F-type ATPases have 2 components, F(1) - the catalytic core - and F(0) - the membrane proton channel. F(1) has five subunits: alpha(3), beta(3), gamma(1), delta(1), epsilon(1). F(0) has three main subunits: a(1), b(2) and c(10-14). The alpha and beta chains form an alternating ring which encloses part of the gamma chain. F(1) is attached to F(0) by a central stalk formed by the gamma and epsilon chains, while a peripheral stalk is formed by the delta and b chains.

It localises to the cell membrane. F(1)F(0) ATP synthase produces ATP from ADP in the presence of a proton or sodium gradient. F-type ATPases consist of two structural domains, F(1) containing the extramembraneous catalytic core and F(0) containing the membrane proton channel, linked together by a central stalk and a peripheral stalk. During catalysis, ATP synthesis in the catalytic domain of F(1) is coupled via a rotary mechanism of the central stalk subunits to proton translocation. Functionally, this protein is part of the stalk that links CF(0) to CF(1). It either transmits conformational changes from CF(0) to CF(1) or is implicated in proton conduction. This Leuconostoc citreum (strain KM20) protein is ATP synthase subunit delta.